The following is a 381-amino-acid chain: MAMHTVRLSPATQLHGGISSNLSPPNRKPNNSIVRYGCGSSKRFRIVTVLASLRENDANGRDNSVRAMEVKKIFEDSPLLPKPLSSNQLTESVSNGSRVRVAYQGVRGAYSESAAEKAYPNCEAVPCEEFDTAFEAVERWLVDRAVLPIENSLGGSIHRNYDLLLRHNLHIVGEVKLAVRHCLLANHGVNIEDLRRVLSHPQALAQCENTLTKLGLVREAVDDTAGAAKQIAFENLNDAAAVASEKAAKIYGLNIVAKDIQDDCDNVTRFLMLAREPIIPGTNRLFKTSIVFSLEEGPGVLFKALAVFALRQINLTKIESRPLRKHPLRASGGLKYFDYLFYVDFEASMADEVAQNALRHLEEFATFLRVLGSYPVDTTML.

The disordered stretch occupies residues 1–32 (MAMHTVRLSPATQLHGGISSNLSPPNRKPNNS). The transit peptide at 1–66 (MAMHTVRLSP…DANGRDNSVR (66 aa)) directs the protein to the chloroplast. Polar residues predominate over residues 18-32 (ISSNLSPPNRKPNNS). The Prephenate dehydratase domain occupies 100–275 (RVAYQGVRGA…NVTRFLMLAR (176 aa)). In terms of domain architecture, ACT spans 289–375 (SIVFSLEEGP…TFLRVLGSYP (87 aa)).

Expressed in roots, leaves, stems, flowers and siliques. Most abundant in leaves and seeds.

It localises to the plastid. The protein localises to the chloroplast stroma. The catalysed reaction is L-arogenate + H(+) = L-phenylalanine + CO2 + H2O. The enzyme catalyses prephenate + H(+) = 3-phenylpyruvate + CO2 + H2O. The protein operates within amino-acid biosynthesis; L-phenylalanine biosynthesis; L-phenylalanine from L-arogenate: step 1/1. It participates in amino-acid biosynthesis; L-phenylalanine biosynthesis; phenylpyruvate from prephenate: step 1/1. In terms of biological role, converts the prephenate produced from the shikimate-chorismate pathway into phenylalanine. Dehydratase that uses arogenate and prephenate as substrates. Utilzes more efficiently arogenate than prephenate. Required for chloroplast division prior to ARC5, but in an ARC3- and ARC6-dependent manner, especially involved in the Z-ring formation. This Arabidopsis thaliana (Mouse-ear cress) protein is Arogenate dehydratase/prephenate dehydratase 2, chloroplastic.